Here is a 60-residue protein sequence, read N- to C-terminus: Large ribosomal subunit protein bL32 (60 aa).

Belongs to the bacterial ribosomal protein bL32 family.

The protein is Large ribosomal subunit protein bL32 of Borrelia turicatae (strain 91E135).